The following is a 106-amino-acid chain: Putative double-stranded DNA mimic protein VCM66_1163 (106 aa).

Belongs to the putative dsDNA mimic protein family.

May act as a double-stranded DNA (dsDNA) mimic. Probably regulates the activity of a dsDNA-binding protein. The polypeptide is Putative double-stranded DNA mimic protein VCM66_1163 (Vibrio cholerae serotype O1 (strain M66-2)).